The primary structure comprises 344 residues: Phosphoribosylformylglycinamidine cyclo-ligase (344 aa).

It belongs to the AIR synthase family.

It localises to the cytoplasm. The enzyme catalyses 2-formamido-N(1)-(5-O-phospho-beta-D-ribosyl)acetamidine + ATP = 5-amino-1-(5-phospho-beta-D-ribosyl)imidazole + ADP + phosphate + H(+). It functions in the pathway purine metabolism; IMP biosynthesis via de novo pathway; 5-amino-1-(5-phospho-D-ribosyl)imidazole from N(2)-formyl-N(1)-(5-phospho-D-ribosyl)glycinamide: step 2/2. The protein is Phosphoribosylformylglycinamidine cyclo-ligase of Haemophilus influenzae (strain PittGG).